A 272-amino-acid chain; its full sequence is 3-methyl-2-oxobutanoate hydroxymethyltransferase (272 aa).

Mg(2+)-binding residues include Asp-42 and Asp-86. 3-methyl-2-oxobutanoate contacts are provided by residues 42–43 (DS), Asp-86, and Lys-116. Glu-118 serves as a coordination point for Mg(2+). The active-site Proton acceptor is Glu-185.

Belongs to the PanB family. As to quaternary structure, homodecamer; pentamer of dimers. Mg(2+) serves as cofactor.

The protein resides in the cytoplasm. It catalyses the reaction 3-methyl-2-oxobutanoate + (6R)-5,10-methylene-5,6,7,8-tetrahydrofolate + H2O = 2-dehydropantoate + (6S)-5,6,7,8-tetrahydrofolate. It participates in cofactor biosynthesis; (R)-pantothenate biosynthesis; (R)-pantoate from 3-methyl-2-oxobutanoate: step 1/2. In terms of biological role, catalyzes the reversible reaction in which hydroxymethyl group from 5,10-methylenetetrahydrofolate is transferred onto alpha-ketoisovalerate to form ketopantoate. This chain is 3-methyl-2-oxobutanoate hydroxymethyltransferase, found in Prochlorococcus marinus (strain MIT 9313).